The following is an 824-amino-acid chain: Putative beta-glucuronidase (824 aa).

A helical membrane pass occupies residues 26 to 43; sequence YLKLVLVLYLIMVSWSGY. The Proton donor role is filled by glutamate 430.

This sequence belongs to the glycosyl hydrolase 2 family.

It localises to the membrane. The enzyme catalyses a beta-D-glucuronoside + H2O = D-glucuronate + an alcohol. Its function is as follows. Glycoside hydrolase that may be involved in ulvan degradation. Ulvan is the main polysaccharide component of the Ulvales (green seaweed) cell wall. It is composed of disaccharide building blocks comprising 3-sulfated rhamnose (Rha3S) linked to D-glucuronic acid (GlcA), L-iduronic acid (IduA), or D-xylose (Xyl). In Formosa agariphila (strain DSM 15362 / KCTC 12365 / LMG 23005 / KMM 3901 / M-2Alg 35-1), this protein is Putative beta-glucuronidase.